A 1664-amino-acid polypeptide reads, in one-letter code: DNA-directed RNA polymerase I subunit RPA190 (1664 aa).

Positions 62, 65, 72, 75, 102, 105, 233, and 236 each coordinate Zn(2+). The disordered stretch occupies residues 280–310 (QAKKLDGSNEASANDEESFDVGRNPTTRPKT). Mg(2+) contacts are provided by Asp627, Asp629, and Asp631. A Phosphoserine modification is found at Ser889. The segment at 992–1004 (PQEYYFHCMAGRE) is bridging helix. The tract at residues 1343–1423 (DIGVAVPRLQ…DSDSEDEDVD (81 aa)) is disordered. Residues 1393 to 1414 (ETMREAEKSSDEEGIDSDKESD) are compositionally biased toward basic and acidic residues. Ser1636 carries the post-translational modification Phosphoserine.

It belongs to the RNA polymerase beta' chain family. In terms of assembly, component of the RNA polymerase I (Pol I) complex consisting of 14 subunits: RPA135, RPA190, RPC40, RPA14, RPB5, RPO26, RPA43, RPB8, RPA12, RPB10, RPC19, RPC10, RPA49 and RPA34. The complex is composed of a horseshoe-shaped core containing ten subunits (RPA135, RPA190, RPB5, RPO26, RPB8, RPB10, RPC10, RPA12, RPC19 and RPC40) where RPA135 and RPA190 form the DNA-binding cleft. Outside of the core, RPA14 and RPA43 form the stalk that mediates interactions with transcription initiation factors and newly synthesized RNA.

The protein localises to the nucleus. It localises to the nucleolus. The enzyme catalyses RNA(n) + a ribonucleoside 5'-triphosphate = RNA(n+1) + diphosphate. In terms of biological role, DNA-dependent RNA polymerases catalyze the transcription of DNA into RNA using the four ribonucleoside triphosphates as substrates. Component of RNA polymerase I (Pol I) which synthesizes ribosomal RNA precursors. Besides, RNA polymerase I has intrinsic RNA cleavage activity. RPA190 and RPA135 both contribute to the polymerase catalytic activity and together form the Pol I active center. In addition, subunit RPA12 contributes a catalytic zinc ribbon that is required for RNA cleavage by Pol I. A single stranded DNA template strand of the promoter is positioned within the central active site cleft of Pol I. A bridging helix emanates from RPA190 and crosses the cleft near the catalytic site and is thought to promote translocation of Pol I by acting as a ratchet that moves the RNA-DNA hybrid through the active site by switching from straight to bent conformations at each step of nucleotide addition. This Saccharomyces cerevisiae (strain ATCC 204508 / S288c) (Baker's yeast) protein is DNA-directed RNA polymerase I subunit RPA190 (RPA190).